An 87-amino-acid chain; its full sequence is NADH-ubiquinone oxidoreductase chain 4L (87 aa).

Transmembrane regions (helical) follow at residues 22–42 and 49–69; these read FLSF…FIIG and LFLI…SLLV.

The protein belongs to the complex I subunit 4L family.

The protein resides in the mitochondrion membrane. The catalysed reaction is a ubiquinone + NADH + 5 H(+)(in) = a ubiquinol + NAD(+) + 4 H(+)(out). In terms of biological role, core subunit of the mitochondrial membrane respiratory chain NADH dehydrogenase (Complex I) that is believed to belong to the minimal assembly required for catalysis. Complex I functions in the transfer of electrons from NADH to the respiratory chain. The immediate electron acceptor for the enzyme is believed to be ubiquinone. The protein is NADH-ubiquinone oxidoreductase chain 4L (ND4L) of Apis mellifera ligustica (Common honeybee).